The following is a 106-amino-acid chain: Small ribosomal subunit protein uS10 (106 aa).

This sequence belongs to the universal ribosomal protein uS10 family. In terms of assembly, part of the 30S ribosomal subunit.

Functionally, involved in the binding of tRNA to the ribosomes. The polypeptide is Small ribosomal subunit protein uS10 (Prochlorococcus marinus subsp. pastoris (strain CCMP1986 / NIES-2087 / MED4)).